The chain runs to 408 residues: MSFFNPPANSNHGYNDDVNTGYNARMHSKLAEREGFHLGNGSDEPRTLYVGNLDSTVTEDFIATLFNQIGSVTKTKVIFDGSNDPYAFVEFSDHGQASQALQTMNKRLLLDREMKVNWAVEPGQQQSKIDTTRHFHVFVGDLSSEVDNQKLREAFQPFGDVSDAKVIRDTNTTKSKGYGFVSYPKREEAERAIEQMNGQWLGRRTIRTNWATRKPGDQEKPSHYNEKSYDEIYNQTSGDNTSVYVGNIASLTEDEIRQGFASFGRITEVRIFKMQGYAFVKFDNKDAAAKAIVQMNNQDVGGQLVRCSWGKTGDTGKTPGGSYGYGYGNSSSGGNSQPYSGYGGGGAYGGGQGGGGHGGPGQQQSNANSQYWQYYAQYYNNPQLMQQWSNYWQQQGGAPQQQNSGGHQ.

RRM domains follow at residues 46 to 121 (RTLY…WAVE), 135 to 213 (FHVF…WATR), and 241 to 312 (TSVY…WGKT).

As to expression, expressed in the germline and also in somatic tissues. Expressed in Ggonads and oocytes. Expression is slightly reduced in the most proximal oocytes, especially the -1 oocyte. Aggregates mostly in the head neurons, muscles, intestine, vulval and hypodermal cells during heat shock. Expressed only in the intestine as a response to heat shock, starvation and dietary restriction.

It is found in the cytoplasm. The protein localises to the nucleus. Its subcellular location is the stress granule. Its function is as follows. Acts downstream of ced-9 in the induction of germline apoptosis under different stress conditions including starvation, osmotic, oxidative, heat shock and UV stress. Plays a role in the formation of stress granules in response to heat shock and oxidative stress but not in response to osmotic stress. Required for the formation of stress granules in the core gonad but may not play a critical role in this process in the oocytes. Plays an important role in the formation of stress granules in the embryo. Protects female germ cells and embryos from heat shock. The chain is Cytotoxic granule-associated RNA binding protein tiar-1 from Caenorhabditis elegans.